Here is a 377-residue protein sequence, read N- to C-terminus: Glutamate 5-kinase (377 aa).

Lys20 lines the ATP pocket. Positions 60, 147, and 159 each coordinate substrate. 179-180 (TD) serves as a coordination point for ATP. In terms of domain architecture, PUA spans 285–363 (AGRLVIDDGA…DKVYQVLGEA (79 aa)).

Belongs to the glutamate 5-kinase family.

The protein localises to the cytoplasm. The enzyme catalyses L-glutamate + ATP = L-glutamyl 5-phosphate + ADP. The protein operates within amino-acid biosynthesis; L-proline biosynthesis; L-glutamate 5-semialdehyde from L-glutamate: step 1/2. Functionally, catalyzes the transfer of a phosphate group to glutamate to form L-glutamate 5-phosphate. The chain is Glutamate 5-kinase from Acinetobacter baumannii (strain AB307-0294).